The chain runs to 335 residues: Anthranilate phosphoribosyltransferase (335 aa).

5-phospho-alpha-D-ribose 1-diphosphate contacts are provided by residues glycine 80, 83 to 84 (GD), threonine 88, 90 to 93 (NIST), 108 to 116 (KHGNRAVSS), and serine 120. Glycine 80 is a binding site for anthranilate. Serine 92 contributes to the Mg(2+) binding site. An anthranilate-binding site is contributed by asparagine 111. Arginine 166 provides a ligand contact to anthranilate. Mg(2+) contacts are provided by aspartate 225 and glutamate 226.

This sequence belongs to the anthranilate phosphoribosyltransferase family. In terms of assembly, homodimer. The cofactor is Mg(2+).

The catalysed reaction is N-(5-phospho-beta-D-ribosyl)anthranilate + diphosphate = 5-phospho-alpha-D-ribose 1-diphosphate + anthranilate. It participates in amino-acid biosynthesis; L-tryptophan biosynthesis; L-tryptophan from chorismate: step 2/5. In terms of biological role, catalyzes the transfer of the phosphoribosyl group of 5-phosphorylribose-1-pyrophosphate (PRPP) to anthranilate to yield N-(5'-phosphoribosyl)-anthranilate (PRA). This is Anthranilate phosphoribosyltransferase from Clostridium kluyveri (strain NBRC 12016).